A 399-amino-acid chain; its full sequence is Argininosuccinate synthase (399 aa).

ATP-binding positions include 10-18 and A38; that span reads AYSGGVDTS. Y89 serves as a coordination point for L-citrulline. G119 is an ATP binding site. L-aspartate is bound by residues T121, N125, and D126. Residue N125 coordinates L-citrulline. The L-citrulline site is built by R129, S177, S186, E262, and Y274.

It belongs to the argininosuccinate synthase family. Type 1 subfamily. As to quaternary structure, homotetramer.

It is found in the cytoplasm. It carries out the reaction L-citrulline + L-aspartate + ATP = 2-(N(omega)-L-arginino)succinate + AMP + diphosphate + H(+). It functions in the pathway amino-acid biosynthesis; L-arginine biosynthesis; L-arginine from L-ornithine and carbamoyl phosphate: step 2/3. This chain is Argininosuccinate synthase, found in Acaryochloris marina (strain MBIC 11017).